The primary structure comprises 394 residues: Elongation factor Tu (394 aa).

The tr-type G domain maps to 10–204 (KPHINIGTIG…AVDDNIPTPE (195 aa)). The segment at 19-26 (GHVDHGKT) is G1. 19 to 26 (GHVDHGKT) contacts GTP. Thr26 is a Mg(2+) binding site. Positions 60-64 (GITIN) are G2. The tract at residues 81–84 (DCPG) is G3. Residues 81–85 (DCPGH) and 136–139 (NKVD) contribute to the GTP site. Positions 136-139 (NKVD) are G4. The segment at 174–176 (SAL) is G5.

It belongs to the TRAFAC class translation factor GTPase superfamily. Classic translation factor GTPase family. EF-Tu/EF-1A subfamily. In terms of assembly, monomer.

It localises to the cytoplasm. It carries out the reaction GTP + H2O = GDP + phosphate + H(+). In terms of biological role, GTP hydrolase that promotes the GTP-dependent binding of aminoacyl-tRNA to the A-site of ribosomes during protein biosynthesis. This is Elongation factor Tu from Chlamydia pneumoniae (Chlamydophila pneumoniae).